A 712-amino-acid polypeptide reads, in one-letter code: Testis-specific gene 10 protein (712 aa).

Residue Ser161 is modified to Phosphoserine. Residues 571-703 (QMTNERISMQ…SPDRDLDRSL (133 aa)) are interaction with HIF1A. The interval 673 to 699 (YHLGSMKPNTKCHSPERAHHRSPDRDL) is disordered. Over residues 685-699 (HSPERAHHRSPDRDL) the composition is skewed to basic and acidic residues. At Ser702 the chain carries Phosphoserine.

It belongs to the CEP135/TSGA10 family. Interacts with HIF1A. Post-translationally, processed into N-terminal 27-kDa and C-terminal 55-kDa fragments. In terms of tissue distribution, expressed in testis, predominantly in elongated spermatids (at protein level). Detected in spermatocytes only at the mRNA, but not at the protein level.

The protein localises to the cytoplasm. The protein resides in the cytoskeleton. Its subcellular location is the microtubule organizing center. It localises to the centrosome. It is found in the centriole. Its function is as follows. Plays a role in spermatogenesis. When overexpressed, prevents nuclear localization of HIF1A. This chain is Testis-specific gene 10 protein (Tsga10), found in Rattus norvegicus (Rat).